The primary structure comprises 582 residues: Hemagglutinin-neuraminidase (582 aa).

At 1–34 the chain is on the intravirion side; sequence MEPSKLFTISDNATFAPGPVNNAADKKTFRTCFR. A helical; Signal-anchor for type II membrane protein transmembrane segment spans residues 35–55; sequence ILVLSVQAVTLILVIVTLGEL. Over 56 to 582 the chain is Virion surface; sequence VRMINDQGLS…LPVLTRLTIT (527 aa). N-linked (GlcNAc...) asparagine; by host glycosylation occurs at asparagine 127. 3 disulfides stabilise this stretch: cysteine 178/cysteine 202, cysteine 192/cysteine 253, and cysteine 244/cysteine 257. Residues 240–245 form an involved in neuraminidase activity region; it reads NRKSCS. 2 N-linked (GlcNAc...) asparagine; by host glycosylation sites follow: asparagine 284 and asparagine 329. 3 disulfide bridges follow: cysteine 350/cysteine 471, cysteine 382/cysteine 392, and cysteine 465/cysteine 475. N-linked (GlcNAc...) asparagine; by host glycans are attached at residues asparagine 400 and asparagine 448. Residue asparagine 507 is glycosylated (N-linked (GlcNAc...) asparagine; by host). Cysteines 545 and 556 form a disulfide.

The protein belongs to the paramyxoviruses hemagglutinin-neuraminidase family. Homotetramer; composed of disulfide-linked homodimers. Interacts with F protein trimer.

It is found in the virion membrane. Its subcellular location is the host cell membrane. It carries out the reaction Hydrolysis of alpha-(2-&gt;3)-, alpha-(2-&gt;6)-, alpha-(2-&gt;8)- glycosidic linkages of terminal sialic acid residues in oligosaccharides, glycoproteins, glycolipids, colominic acid and synthetic substrates.. Functionally, attaches the virus to alpha-2,3-linked sialic acid-containing cell receptors and thereby initiating infection. Binding of HN protein to the receptor induces a conformational change that allows the F protein to trigger virion/cell membranes fusion. Binds to the glycan motifs sialyl Lewis (SLe) and GM2 ganglioside (GM2-glycan). Its function is as follows. Neuraminidase activity ensures the efficient spread of the virus by dissociating the mature virions from the neuraminic acid containing glycoproteins. This Mumps virus (strain RW) (MuV) protein is Hemagglutinin-neuraminidase (HN).